The sequence spans 232 residues: Probable phospholipid hydroperoxide glutathione peroxidase 6, mitochondrial (232 aa).

The N-terminal 54 residues, Met1 to Gly54, are a transit peptide targeting the mitochondrion. Cys105 is a catalytic residue.

The protein belongs to the glutathione peroxidase family. As to expression, expressed at a low but detectable level in leaves, stems, and flowers, but at a higher level in siliques and even higher in roots. Predominantly expressed in seeds.

Its subcellular location is the mitochondrion. It catalyses the reaction a hydroperoxy polyunsaturated fatty acid + 2 glutathione = a hydroxy polyunsaturated fatty acid + glutathione disulfide + H2O. Functionally, protects cells and enzymes from oxidative damage, by catalyzing the reduction of hydrogen peroxide, lipid peroxides and organic hydroperoxide, by glutathione. The polypeptide is Probable phospholipid hydroperoxide glutathione peroxidase 6, mitochondrial (GPX6) (Arabidopsis thaliana (Mouse-ear cress)).